Here is a 206-residue protein sequence, read N- to C-terminus: Large ribosomal subunit protein uL4 (206 aa).

The protein belongs to the universal ribosomal protein uL4 family. Part of the 50S ribosomal subunit.

One of the primary rRNA binding proteins, this protein initially binds near the 5'-end of the 23S rRNA. It is important during the early stages of 50S assembly. It makes multiple contacts with different domains of the 23S rRNA in the assembled 50S subunit and ribosome. Its function is as follows. Forms part of the polypeptide exit tunnel. The chain is Large ribosomal subunit protein uL4 from Rhodopseudomonas palustris (strain ATCC BAA-98 / CGA009).